The chain runs to 121 residues: NADH-ubiquinone oxidoreductase chain 3 (121 aa).

The next 3 membrane-spanning stretches (helical) occupy residues 11 to 31 (ILTFFAISFSISTLILALSYF), 63 to 83 (FYLVAILFLIFDLEISFLFPW), and 90 to 110 (LSIFGFWSMIVFLIILTLGFI).

It belongs to the complex I subunit 3 family.

The protein localises to the mitochondrion membrane. It carries out the reaction a ubiquinone + NADH + 5 H(+)(in) = a ubiquinol + NAD(+) + 4 H(+)(out). Functionally, core subunit of the mitochondrial membrane respiratory chain NADH dehydrogenase (Complex I) that is believed to belong to the minimal assembly required for catalysis. Complex I functions in the transfer of electrons from NADH to the respiratory chain. The immediate electron acceptor for the enzyme is believed to be ubiquinone. This Porphyra purpurea (Red seaweed) protein is NADH-ubiquinone oxidoreductase chain 3 (NAD3).